A 288-amino-acid polypeptide reads, in one-letter code: Ribosome biogenesis GTPase A (288 aa).

One can recognise a CP-type G domain in the interval 14-179 (RRQVTEKLKL…LLDTPGILWP (166 aa)). GTP is bound by residues 58-61 (NKVD), 131-136 (NVGKST), and G175.

Belongs to the TRAFAC class YlqF/YawG GTPase family. MTG1 subfamily. In terms of assembly, interacts with ctc. Interacts with the immature 50S ribosome subunit. 2 molecules of rbgA bind to one 50S subunit.

The protein localises to the cytoplasm. Essential protein that is required for a late step of 50S ribosomal subunit assembly. Has GTPase activity that is stimulated by interaction with the immature 50S ribosome subunit. Binds to the 23S rRNA. Required for the association of ribosomal proteins rplP and rpmA with the large subunit. This Priestia megaterium (strain DSM 319 / IMG 1521) (Bacillus megaterium) protein is Ribosome biogenesis GTPase A.